The sequence spans 394 residues: Elongation factor Tu (394 aa).

The region spanning 10–204 is the tr-type G domain; that stretch reads KPHINIGTIG…AVDDNIPTPE (195 aa). Positions 19 to 26 are G1; sequence GHVDHGKT. Position 19–26 (19–26) interacts with GTP; sequence GHVDHGKT. Residue threonine 26 coordinates Mg(2+). Residues 60-64 are G2; that stretch reads GITIN. A G3 region spans residues 81 to 84; the sequence is DCPG. GTP is bound by residues 81–85 and 136–139; these read DCPGH and NKID. Residues 136–139 form a G4 region; sequence NKID. Residues 174–176 form a G5 region; that stretch reads SAL.

Belongs to the TRAFAC class translation factor GTPase superfamily. Classic translation factor GTPase family. EF-Tu/EF-1A subfamily. In terms of assembly, monomer.

It localises to the cytoplasm. It catalyses the reaction GTP + H2O = GDP + phosphate + H(+). In terms of biological role, GTP hydrolase that promotes the GTP-dependent binding of aminoacyl-tRNA to the A-site of ribosomes during protein biosynthesis. The protein is Elongation factor Tu of Chlamydia trachomatis serovar L2 (strain ATCC VR-902B / DSM 19102 / 434/Bu).